The chain runs to 76 residues: Acyl carrier protein (76 aa).

Residues 1-76 form the Carrier domain; it reads MDTFESVKAV…DVVAYIEANK (76 aa). Serine 36 carries the post-translational modification O-(pantetheine 4'-phosphoryl)serine.

This sequence belongs to the acyl carrier protein (ACP) family. Post-translationally, 4'-phosphopantetheine is transferred from CoA to a specific serine of apo-ACP by AcpS. This modification is essential for activity because fatty acids are bound in thioester linkage to the sulfhydryl of the prosthetic group.

The protein localises to the cytoplasm. It participates in lipid metabolism; fatty acid biosynthesis. Carrier of the growing fatty acid chain in fatty acid biosynthesis. The polypeptide is Acyl carrier protein (Helicobacter hepaticus (strain ATCC 51449 / 3B1)).